Consider the following 419-residue polypeptide: Gamma-glutamyl phosphate reductase (419 aa).

This sequence belongs to the gamma-glutamyl phosphate reductase family.

The protein localises to the cytoplasm. It carries out the reaction L-glutamate 5-semialdehyde + phosphate + NADP(+) = L-glutamyl 5-phosphate + NADPH + H(+). The protein operates within amino-acid biosynthesis; L-proline biosynthesis; L-glutamate 5-semialdehyde from L-glutamate: step 2/2. In terms of biological role, catalyzes the NADPH-dependent reduction of L-glutamate 5-phosphate into L-glutamate 5-semialdehyde and phosphate. The product spontaneously undergoes cyclization to form 1-pyrroline-5-carboxylate. The protein is Gamma-glutamyl phosphate reductase of Marinomonas sp. (strain MWYL1).